An 88-amino-acid polypeptide reads, in one-letter code: Apolipoprotein C-I (88 aa).

A signal peptide spans 1-26 (MRLFISLPILIVVLAMALEGPAPAQA).

The protein belongs to the apolipoprotein C1 family.

The protein localises to the secreted. Functionally, inhibitor of lipoprotein binding to the low density lipoprotein (LDL) receptor, LDL receptor-related protein, and very low density lipoprotein (VLDL) receptor. Associates with high density lipoproteins (HDL) and the triacylglycerol-rich lipoproteins in the plasma and makes up about 10% of the protein of the VLDL and 2% of that of HDL. Appears to interfere directly with fatty acid uptake and is also the major plasma inhibitor of cholesteryl ester transfer protein (CETP). Modulates the interaction of APOE with beta-migrating VLDL and inhibits binding of beta-VLDL to the LDL receptor-related protein. Binds free fatty acids and reduces their intracellular esterification. The chain is Apolipoprotein C-I (Apoc1) from Neotoma lepida (Desert woodrat).